A 412-amino-acid polypeptide reads, in one-letter code: Argininosuccinate synthase (412 aa).

ATP is bound by residues 12-20 (AYSGGLDTS) and A39. L-citrulline-binding residues include Y91 and S96. G121 is a binding site for ATP. Residues T123, N127, and D128 each contribute to the L-aspartate site. L-citrulline is bound at residue N127. L-citrulline is bound by residues R131, S180, S189, E265, and Y277.

It belongs to the argininosuccinate synthase family. Type 1 subfamily. Homotetramer.

It localises to the cytoplasm. The catalysed reaction is L-citrulline + L-aspartate + ATP = 2-(N(omega)-L-arginino)succinate + AMP + diphosphate + H(+). The protein operates within amino-acid biosynthesis; L-arginine biosynthesis; L-arginine from L-ornithine and carbamoyl phosphate: step 2/3. In Pseudoalteromonas atlantica (strain T6c / ATCC BAA-1087), this protein is Argininosuccinate synthase.